A 374-amino-acid chain; its full sequence is Translocating chain-associated membrane protein 1 (374 aa).

The Cytoplasmic segment spans residues M1–M32. Residues L33 to L53 traverse the membrane as a helical segment. Residues Q54–A81 lie on the Lumenal side of the membrane. An N-linked (GlcNAc...) asparagine glycan is attached at N56. A helical transmembrane segment spans residues T82 to L102. Residues D103 to E121 are Cytoplasmic-facing. The TLC domain occupies S117 to H326. The chain crosses the membrane as a helical span at residues S122 to S142. Residues E143 to N159 are Lumenal-facing. Residues L160–F180 form a helical membrane-spanning segment. Residues P181–D192 are Cytoplasmic-facing. A helical membrane pass occupies residues I193 to L213. A topological domain (lumenal) is located at residue N214. Residues L215–I235 form a helical membrane-spanning segment. At S236–S251 the chain is on the cytoplasmic side. The chain crosses the membrane as a helical span at residues L252–V272. The Lumenal portion of the chain corresponds to G273–R297. The chain crosses the membrane as a helical span at residues I298 to F318. At Q319–S374 the chain is on the cytoplasmic side. Positions P333–S374 are disordered. The span at V334–R347 shows a compositional bias: basic residues. The span at N352–A363 shows a compositional bias: polar residues. S365 bears the Phosphoserine mark.

Belongs to the TRAM family. As to quaternary structure, interacts with SEC61B. May interact with Derlin-1/DERL1. In terms of processing, N-glycosylated.

It is found in the endoplasmic reticulum membrane. In terms of biological role, involved in the translocation of nascent protein chains into or through the endoplasmic reticulum (ER) membrane by facilitating the proper chain positioning at the SEC61 channel. Regulates the exposure of nascent secretory protein chain to the cytosol during translocation into the ER. May affect the phospholipid bilayer in the vicinity of the lateral gate of the SEC61 channel, thereby facilitating ER protein transport. Intimately associates with transmembrane (TM) domain of nascent membrane proteins during the entire integration process into the ER membrane. Associates with the second TM domain of G-protein-coupled receptor opsin/OPSD nascent chain in the ER membrane, which may facilitate its integration into the membrane. Under conditions of ER stress, participates in the disposal of misfolded ER membrane proteins during the unfolded protein response (UPR), an integrated stress response (ISR) pathway, by selectively retrotranslocating misfolded ER-membrane proteins from the ER into the cytosol where they are ubiquitinated and degraded by the proteasome. The chain is Translocating chain-associated membrane protein 1 from Rattus norvegicus (Rat).